We begin with the raw amino-acid sequence, 101 residues long: PAT complex subunit Asterix (101 aa).

A disordered region spans residues 1-26 (MADPRRPARVTRYKPPTTESNPALED). Over 1–27 (MADPRRPARVTRYKPPTTESNPALEDP) the chain is Cytoplasmic. The chain crosses the membrane as a helical span at residues 28–46 (TPDYMNLLGMVFSMCGLML). Residue Lys47 is a topological domain, lumenal. Residues 48–65 (LKWCAWIAVYCSFISFAN) traverse the membrane as a helical segment. Over 66–69 (SRSS) the chain is Cytoplasmic. A helical membrane pass occupies residues 70–90 (EDTKQMMSSFMLSISAVVMSY). The Lumenal portion of the chain corresponds to 91-101 (LQNPQPMSPPW).

Belongs to the Asterix family. Component of the multi-pass translocon (MPT) complex.

Its subcellular location is the endoplasmic reticulum membrane. Its function is as follows. Component of the multi-pass translocon (MPT) complex that mediates insertion of multi-pass membrane proteins into the lipid bilayer of membranes. The MPT complex takes over after the SEC61 complex: following membrane insertion of the first few transmembrane segments of proteins by the SEC61 complex, the MPT complex occludes the lateral gate of the SEC61 complex to promote insertion of subsequent transmembrane regions. In Gallus gallus (Chicken), this protein is PAT complex subunit Asterix (WDR83OS).